A 208-amino-acid polypeptide reads, in one-letter code: Inosine triphosphate pyrophosphatase (208 aa).

Alanine 2 is modified (N-acetylalanine). An ITP-binding site is contributed by 14–19; it reads TGNAKK. Glutamate 44 is a binding site for Mg(2+). ITP contacts are provided by residues lysine 56, 72 to 73, lysine 89, 149 to 152, lysine 172, and 177 to 178; these read DT, FGWD, and HR.

This sequence belongs to the HAM1 NTPase family. In terms of assembly, homodimer. It depends on Mg(2+) as a cofactor. Mn(2+) serves as cofactor.

It is found in the cytoplasm. It carries out the reaction ITP + H2O = IMP + diphosphate + H(+). The catalysed reaction is dITP + H2O = dIMP + diphosphate + H(+). It catalyses the reaction XTP + H2O = XMP + diphosphate + H(+). The enzyme catalyses N(6)-hydroxy-dATP + H2O = N(6)-hydroxy-dAMP + diphosphate + H(+). Functionally, pyrophosphatase that hydrolyzes the non-canonical purine nucleotides inosine triphosphate (ITP), deoxyinosine triphosphate (dITP) as well as 2'-deoxy-N-6-hydroxylaminopurine triphosphate (dHAPTP) and xanthosine 5'-triphosphate (XTP) to their respective monophosphate derivatives. The enzyme does not distinguish between the deoxy- and ribose forms. Probably excludes non-canonical purines from RNA and DNA precursor pools, thus preventing their incorporation into RNA and DNA and avoiding chromosomal lesions. This chain is Inosine triphosphate pyrophosphatase, found in Bos taurus (Bovine).